The primary structure comprises 1310 residues: MQHCLEQSDITQYQQYYSSWCDARALGPRLSPVALSLLVGRNEHRLSAEPEVHRSQGRCVGVEVPREDINYLSTTCKPEIKSRNLKEDSEDQGRLPTRLPEIMLVGSQSFSPGGPNGIIRSQSFAGFSGLQERRSRQVLGVSPGITRAPSKDVYCKPGYACRVEFLLCKAFSKQTCNSFIENASALKKPQAKLKKMHNLGHKNTNTPKEPQPKRVEEVYRALKNGLDEYLEFHQTELDKLTAQLKDMKRNSRLGVLYDLDKGVLYDLDKVDELYEAYCIQRRLQDGASKMKQAFATSPASKAARESLSEINRSYKEYTENMCTIEAELESLLGEFSIKMKGLAGFARLCPGDQYESMDGPNPYQRQQGEVYFSLLATRRIGDGSCLSKGARIFMKYGRQRWKLKGKIEVNGKQSWDGEETVFLPLIVGFISIKVTELKGLATHILVGSVTCETKELFAARPQVVAVDINDLGTIKLNLEITWYPFDVEDTTPSSGPGNKTAALQRRMSMYSQGTPETPTFKDQSFFSNLPDDIFESGNAAEEKRPLSLSFSDLQDGDCVFTSSSTTSPSSSHSAHPEITITPAELTHSSLSSQNEGTEDSSSASSRNSLGEDHEPKSHSKSDTVEPKKPSVDARSGTESLFLENSVAEALLQESDEASELKPVELDTFEGNITKQLVKRLTSAEGPITTNKLFFEGSVGSESEAGRSFLDGSLEDAFNGLFLALDPHKEQYKEFQDLNQEVTHLDDVLKCKPAGSRSRSSSLSLTVESALESFDFLNTSDFDEEEEDGDEVCHVGGGADSVFSDTETEKSGSVHPEARGHLSEALTEDTGVGTSVAGSPLPLTTGNESLDITIVKHLQYCTQLVQQIVFSSKTPFVARSLLEKLSRQVLVLQKLAAVSDENLGNITSVVEAIPEFHKKPSLLSFWTKCCSPSGVYHSSAAHLIKQLEASFARNINKDYPGLAEPVFRTLVSQILDRAEPLLCSGLSSEVITVFQYYSFLTSHGVSDLETHLGQLARQVAMVQTLQSLRDEKLLQTMSDLAPSNLPAQQEVLRTLALLLTKDDNEVSEAVTLYLAAASKNEHFREKALLYYCEALTKTNLQLQKAACLALKSLEATESIKMLVTLCQSDTEEIRTVASETLLSLAPYSGSAMTSQIRQNYSTEVEAAVNRLVNLHLRASYTYLSLGFFFDPDDVALEGNERGGRALFQDVQKPSQDEWGKTLEAMEAALALEKNLNQALLDLHALGSARTDPHLCDFLESHFLDKEVKLIKKMGNHLTNLRRVAGPQPAQTGVAQASLGEYLFERLTLKHD.

Ser123 and Ser178 each carry phosphoserine. Positions 196–254 are involved in cell filopodia formation; it reads MHNLGHKNTNTPKEPQPKRVEEVYRALKNGLDEYLEFHQTELDKLTAQLKDMKRNSRLG. Residues 224 to 253 are a coiled coil; sequence NGLDEYLEFHQTELDKLTAQLKDMKRNSRL. Ser508 bears the Phosphoserine mark. Residues 588–608 are compositionally biased toward polar residues; sequence SSLSSQNEGTEDSSSASSRNS. The tract at residues 588 to 639 is disordered; the sequence is SSLSSQNEGTEDSSSASSRNSLGEDHEPKSHSKSDTVEPKKPSVDARSGTES. Over residues 609–631 the composition is skewed to basic and acidic residues; that stretch reads LGEDHEPKSHSKSDTVEPKKPSV. Phosphoserine is present on Ser682.

Belongs to the RIPOR family. In terms of assembly, homooligomer; homooligomerization is regulated by RHOC and leads to the formation of concatemers through the association of N- and C-termini. Interacts (phosphorylated form) with 14-3-3 proteins; these interactions occur during myogenic cell differentiation and also induces T cell proliferation arrest. Interacts (phosphorylated form) with HDAC6; this interaction occurs during early myogenic differentiation, prevents HDAC6 to deacetylate tubulin and also induces T cell proliferation arrest. Interacts with DYSF; this interaction occurs during early myogenic differentiation. Interacts with MYOF. Interacts (via active GTP- or inactive GDP-bound forms) with RHOA; this interaction is direct, blocks the loading of GTP to RHOA and decreases upon chemokine CCL19 stimulation in primary T lymphocytes. Interacts with RHOC. Interacts (via phosphorylated form) with YWHAB; this interaction occurs in a chemokine-dependent manner and does not compete for binding of RIPOR2 with RHOA nor blocks inhibition of RIPOR2-mediated RHOA activity. Interacts with YWHAE. Interacts with YWHAQ. Post-translationally, phosphorylated. Chemokine-induced phosphorylation in neutrophils occurs in a PKC- and AKT-dependent manner, resulting in RIPOR2 interaction with YWHAB and stabilization. Phosphorylated by PKCA, AKT1 and MAPKAPK1A; in vitro. In terms of tissue distribution, expressed in the cochlea (at protein level).

Its subcellular location is the cytoplasm. It is found in the cytoskeleton. It localises to the cell projection. The protein localises to the filopodium. The protein resides in the apical cell membrane. Its subcellular location is the stereocilium. It is found in the stereocilium membrane. Its function is as follows. Acts as an inhibitor of the small GTPase RHOA and plays several roles in the regulation of myoblast and hair cell differentiation, lymphocyte T proliferation and neutrophil polarization. Plays a role in fetal mononuclear myoblast differentiation by promoting filopodia and myotube formation. Maintains naive T lymphocytes in a quiescent state and prevents chemokine-induced T lymphocyte responses, such as cell adhesion, polarization and migration. Involved also in the regulation of neutrophil polarization, chemotaxis and adhesion. Required for normal development of inner and outer hair cell stereocilia within the cochlea of the inner ear. Plays a role for maintaining the structural organization of the basal domain of stereocilia. Involved in mechanosensory hair cell function. Required for normal hearing. The sequence is that of Rho family-interacting cell polarization regulator 2 from Rattus norvegicus (Rat).